We begin with the raw amino-acid sequence, 485 residues long: Hexokinase-1 (485 aa).

Residues lysine 21–alanine 468 enclose the Hexokinase domain. The tract at residues threonine 75–isoleucine 209 is hexokinase small subdomain. ATP-binding positions include aspartate 86–asparagine 91 and lysine 111. Substrate contacts are provided by residues serine 158, threonine 175–lysine 176, asparagine 210–aspartate 211, and asparagine 237. Residues asparagine 210–aspartate 457 form a hexokinase large subdomain region. Serine 245 carries the post-translational modification Phosphoserine. Substrate is bound at residue glutamate 269. Serine 272 is subject to Phosphoserine. Glutamate 302 contributes to the substrate binding site. Residues glycine 307 to tyrosine 308, threonine 344 to alanine 348, and serine 419 to lysine 423 each bind ATP.

Belongs to the hexokinase family. In terms of assembly, homodimer.

It catalyses the reaction a D-hexose + ATP = a D-hexose 6-phosphate + ADP + H(+). The enzyme catalyses D-fructose + ATP = D-fructose 6-phosphate + ADP + H(+). The catalysed reaction is D-glucose + ATP = D-glucose 6-phosphate + ADP + H(+). Its pathway is carbohydrate metabolism; hexose metabolism. It participates in carbohydrate degradation; glycolysis; D-glyceraldehyde 3-phosphate and glycerone phosphate from D-glucose: step 1/4. Subject to allosteric control. Substrate inhibition by ATP. Its function is as follows. Catalyzes the phosphorylation of hexose, such as D-glucose and D-fructose, to hexose 6-phosphate (D-glucose 6-phosphate and D-fructose 6-phosphate, respectively). Mediates the initial step of glycolysis by catalyzing phosphorylation of D-glucose to D-glucose 6-phosphate. This is Hexokinase-1 (HXK1) from Saccharomyces cerevisiae (strain ATCC 204508 / S288c) (Baker's yeast).